The primary structure comprises 279 residues: Putative colanic acid biosynthesis glycosyl transferase WcaA (279 aa).

To R.meliloti ExoO.

The protein operates within slime biogenesis; slime polysaccharide biosynthesis. This Escherichia coli (strain K12) protein is Putative colanic acid biosynthesis glycosyl transferase WcaA (wcaA).